We begin with the raw amino-acid sequence, 42 residues long: Potassium channel toxin gamma-KTx 1.5 (42 aa).

Cystine bridges form between cysteine 5/cysteine 23, cysteine 11/cysteine 34, cysteine 20/cysteine 39, and cysteine 24/cysteine 41.

Belongs to the ergtoxin family. Gamma-KTx 1 subfamily. As to expression, expressed by the venom gland.

It localises to the secreted. Functionally, blocks Kv11/ERG potassium channels. The polypeptide is Potassium channel toxin gamma-KTx 1.5 (Centruroides limpidus (Mexican scorpion)).